We begin with the raw amino-acid sequence, 275 residues long: Phosphate import ATP-binding protein PstB (275 aa).

In terms of domain architecture, ABC transporter spans 28 to 270 (IDCRDIRVFY…PREKRTEDYI (243 aa)). 60–67 (GPSGCGKS) serves as a coordination point for ATP.

It belongs to the ABC transporter superfamily. Phosphate importer (TC 3.A.1.7) family. The complex is composed of two ATP-binding proteins (PstB), two transmembrane proteins (PstC and PstA) and a solute-binding protein (PstS).

The protein localises to the cell inner membrane. The catalysed reaction is phosphate(out) + ATP + H2O = ADP + 2 phosphate(in) + H(+). In terms of biological role, part of the ABC transporter complex PstSACB involved in phosphate import. Responsible for energy coupling to the transport system. The chain is Phosphate import ATP-binding protein PstB from Hyphomonas neptunium (strain ATCC 15444).